Consider the following 382-residue polypeptide: Histidine biosynthesis bifunctional protein HisB (382 aa).

Positions 1–190 are histidinol-phosphatase; that stretch reads MQKIVFIDRD…EIYEFLRLPA (190 aa). The active-site Nucleophile is D8. The Mg(2+) site is built by D8, D10, and D129. The Proton donor role is filled by D10. Residues 191-382 form an imidazoleglycerol-phosphate dehydratase region; sequence RTALVERNTK…DNLPSTKGVL (192 aa).

It in the N-terminal section; belongs to the histidinol-phosphatase family. The protein in the C-terminal section; belongs to the imidazoleglycerol-phosphate dehydratase family. The cofactor is Mg(2+).

It localises to the cytoplasm. It catalyses the reaction D-erythro-1-(imidazol-4-yl)glycerol 3-phosphate = 3-(imidazol-4-yl)-2-oxopropyl phosphate + H2O. The enzyme catalyses L-histidinol phosphate + H2O = L-histidinol + phosphate. It participates in amino-acid biosynthesis; L-histidine biosynthesis; L-histidine from 5-phospho-alpha-D-ribose 1-diphosphate: step 6/9. Its pathway is amino-acid biosynthesis; L-histidine biosynthesis; L-histidine from 5-phospho-alpha-D-ribose 1-diphosphate: step 8/9. This Spirosoma linguale (strain ATCC 33905 / DSM 74 / LMG 10896 / Claus 1) protein is Histidine biosynthesis bifunctional protein HisB.